A 557-amino-acid polypeptide reads, in one-letter code: Dihydroxy-acid dehydratase (557 aa).

Residue cysteine 50 participates in [2Fe-2S] cluster binding. Aspartate 82 is a binding site for Mg(2+). Cysteine 123 is a [2Fe-2S] cluster binding site. The Mg(2+) site is built by aspartate 124 and lysine 125. At lysine 125 the chain carries N6-carboxylysine. Cysteine 195 provides a ligand contact to [2Fe-2S] cluster. Position 447 (glutamate 447) interacts with Mg(2+). The active-site Proton acceptor is the serine 473.

It belongs to the IlvD/Edd family. Homodimer. It depends on [2Fe-2S] cluster as a cofactor. The cofactor is Mg(2+).

It carries out the reaction (2R)-2,3-dihydroxy-3-methylbutanoate = 3-methyl-2-oxobutanoate + H2O. The catalysed reaction is (2R,3R)-2,3-dihydroxy-3-methylpentanoate = (S)-3-methyl-2-oxopentanoate + H2O. The protein operates within amino-acid biosynthesis; L-isoleucine biosynthesis; L-isoleucine from 2-oxobutanoate: step 3/4. It participates in amino-acid biosynthesis; L-valine biosynthesis; L-valine from pyruvate: step 3/4. Functions in the biosynthesis of branched-chain amino acids. Catalyzes the dehydration of (2R,3R)-2,3-dihydroxy-3-methylpentanoate (2,3-dihydroxy-3-methylvalerate) into 2-oxo-3-methylpentanoate (2-oxo-3-methylvalerate) and of (2R)-2,3-dihydroxy-3-methylbutanoate (2,3-dihydroxyisovalerate) into 2-oxo-3-methylbutanoate (2-oxoisovalerate), the penultimate precursor to L-isoleucine and L-valine, respectively. The chain is Dihydroxy-acid dehydratase from Nitrosomonas eutropha (strain DSM 101675 / C91 / Nm57).